The sequence spans 244 residues: Glucosamine-6-phosphate deaminase (244 aa).

The active-site Proton acceptor; for enolization step is the Asp67. The active-site For ring-opening step is the Asn136. The Proton acceptor; for ring-opening step role is filled by His138. The For ring-opening step role is filled by Glu143.

It belongs to the glucosamine/galactosamine-6-phosphate isomerase family. NagB subfamily.

The enzyme catalyses alpha-D-glucosamine 6-phosphate + H2O = beta-D-fructose 6-phosphate + NH4(+). Its pathway is amino-sugar metabolism; N-acetylneuraminate degradation; D-fructose 6-phosphate from N-acetylneuraminate: step 5/5. Its function is as follows. Catalyzes the reversible isomerization-deamination of glucosamine 6-phosphate (GlcN6P) to form fructose 6-phosphate (Fru6P) and ammonium ion. The polypeptide is Glucosamine-6-phosphate deaminase (Clostridium botulinum (strain ATCC 19397 / Type A)).